The chain runs to 974 residues: Receptor-like protein 7 (974 aa).

The first 24 residues, 1-24 (MSFLIRSICFLILIPSFLITFVSA), serve as a signal peptide directing secretion. Residues 25–930 (TQHLCHSDQK…EEEEEESFSW (906 aa)) lie on the Extracellular side of the membrane. Asn54 and Asn90 each carry an N-linked (GlcNAc...) asparagine glycan. LRR repeat units lie at residues 96–120 (LRHL…EFDK), 122–145 (TGLE…LLQL), 147–166 (KLVS…SFHY), 181–204 (LRNL…EFSN), 206–229 (RSLR…ILLI), and 230–252 (PNLQ…VFHE). A glycan (N-linked (GlcNAc...) asparagine) is linked at Asn253. LRR repeat units lie at residues 254–277 (NSLL…ISSL), 278–301 (KNLT…LGNL), 302–325 (SHLS…IGNL), 327–349 (QLTN…LSNL), and 350–373 (TKLN…ISQL). Residues Asn279 and Asn300 are each glycosylated (N-linked (GlcNAc...) asparagine). The N-linked (GlcNAc...) asparagine glycan is linked to Asn348. One copy of the LRR 12; degenerate repeat lies at 374–396 (SKLKFFFADDNPFIGAILSPLLK). LRR repeat units lie at residues 397–422 (IPSL…IFML), 425–448 (LETF…VFSS), 454–472 (TLYI…SDFP), 473–495 (SNLE…IRKG), 496–519 (RNLQ…LWRM), 521–542 (TLNS…VKAS), 544–570 (ESQL…SLRY), 572–589 (SGSN…ICGL), 590–616 (SSLE…LMSS), 618–638 (SDLD…FMNA), 639–662 (TKLR…LTGC), 664–685 (SLEV…ELNS), 687–712 (QKLQ…VWFG), 713–737 (FPQL…YFMN), 785–809 (LTIY…IGLL), 810–833 (KELR…LANL), 834–857 (KNLE…LGTL), and 859–882 (SLAW…QFQR). N-linked (GlcNAc...) asparagine glycosylation is found at Asn434, Asn466, and Asn484. A glycan (N-linked (GlcNAc...) asparagine) is linked at Asn529. N-linked (GlcNAc...) asparagine glycosylation is found at Asn577, Asn603, Asn624, and Asn637. N-linked (GlcNAc...) asparagine glycosylation is present at Asn737. 3 N-linked (GlcNAc...) asparagine glycosylation sites follow: Asn816, Asn845, and Asn864. Residues 899–923 (LENVCGHIKESTPTQTEPLETKEEE) are disordered. The helical transmembrane segment at 931 to 951 (IAAGLGFAPGVVFGLAMGYIV) threads the bilayer. Residues 952-974 (VSYKHQWFMKTFGRSKQQNTRTR) lie on the Cytoplasmic side of the membrane.

Belongs to the RLP family.

Its subcellular location is the cell membrane. The chain is Receptor-like protein 7 from Arabidopsis thaliana (Mouse-ear cress).